A 169-amino-acid chain; its full sequence is Protein-export protein SecB (169 aa).

The protein belongs to the SecB family. As to quaternary structure, homotetramer, a dimer of dimers. One homotetramer interacts with 1 SecA dimer.

It is found in the cytoplasm. Functionally, one of the proteins required for the normal export of preproteins out of the cell cytoplasm. It is a molecular chaperone that binds to a subset of precursor proteins, maintaining them in a translocation-competent state. It also specifically binds to its receptor SecA. The protein is Protein-export protein SecB of Haemophilus influenzae (strain 86-028NP).